A 97-amino-acid chain; its full sequence is MSIRPLHDRVIVKRKEVETKSAGGIVLTGSAAAKSTRGEIIAVGKGRILENGTVQPLDVKVGDIVIFNDGYGVKTEKIDNEEVLIMPESDILAIVEA.

The protein belongs to the GroES chaperonin family. In terms of assembly, heptamer of 7 subunits arranged in a ring. Interacts with the chaperonin GroEL.

The protein resides in the cytoplasm. Functionally, together with the chaperonin GroEL, plays an essential role in assisting protein folding. The GroEL-GroES system forms a nano-cage that allows encapsulation of the non-native substrate proteins and provides a physical environment optimized to promote and accelerate protein folding. GroES binds to the apical surface of the GroEL ring, thereby capping the opening of the GroEL channel. This chain is Co-chaperonin GroES, found in Klebsiella pneumoniae subsp. pneumoniae (strain ATCC 700721 / MGH 78578).